Reading from the N-terminus, the 642-residue chain is Threonine--tRNA ligase (642 aa).

Residues 1–61 (MPVITLPDGS…ENDATLSIIT (61 aa)) form the TGS domain. Residues 243–534 (DHRKIGKQLD…LTEEFAGFFP (292 aa)) form a catalytic region. Zn(2+) is bound by residues Cys-334, His-385, and His-511.

It belongs to the class-II aminoacyl-tRNA synthetase family. Homodimer. It depends on Zn(2+) as a cofactor.

The protein localises to the cytoplasm. The enzyme catalyses tRNA(Thr) + L-threonine + ATP = L-threonyl-tRNA(Thr) + AMP + diphosphate + H(+). Functionally, catalyzes the attachment of threonine to tRNA(Thr) in a two-step reaction: L-threonine is first activated by ATP to form Thr-AMP and then transferred to the acceptor end of tRNA(Thr). Also edits incorrectly charged L-seryl-tRNA(Thr). The chain is Threonine--tRNA ligase from Salmonella paratyphi A (strain ATCC 9150 / SARB42).